Here is a 705-residue protein sequence, read N- to C-terminus: ATP-dependent DNA helicase Q-like 2 (705 aa).

The stretch at 1–30 (MESEAIQEDLQNLDVELKDVQGQISALIEH) forms a coiled coil. One can recognise a Helicase ATP-binding domain in the interval 98–273 (INAIMTGRDV…IEMLHIPKCV (176 aa)). 111 to 118 (MAAGGGKS) is a binding site for ATP. Positions 217–220 (DEAH) match the DEAH box motif. Positions 298–450 (VVDEIAEFIR…DIVRYCQSKT (153 aa)) constitute a Helicase C-terminal domain. One can recognise an HRDC domain in the interval 591-670 (SITFSGLELK…MRHEAVSEQL (80 aa)). A disordered region spans residues 668-705 (EQLVEDPTKEETCKSRLRKRAKTQKDVVLVESSGEEEA).

It belongs to the helicase family. RecQ subfamily. In terms of assembly, interacts with WEX. It depends on Mg(2+) as a cofactor. Mn(2+) serves as cofactor. As to expression, expressed in shoots and flowers. Expressed in young leaves, inflorescences, roots, shoot apical meristem, young siliques, and mature green siliques.

It is found in the nucleus. The catalysed reaction is Couples ATP hydrolysis with the unwinding of duplex DNA by translocating in the 3'-5' direction.. The enzyme catalyses ATP + H2O = ADP + phosphate + H(+). In terms of biological role, 3'-5' DNA helicase that may play a role in the repair of DNA. Its DNA unwinding activity in vitro is dependent on magnesium, and ATP or dATP. Can use GTP/dGTP, CTP/dCTP or UTP/dUTP as nucleotide cofactors. Catalyzes Holliday junction branch migration and replication fork regression. Disrupts D-loop structures. Unwinds G-quadruplex DNA, found in telomeric DNA. In Arabidopsis thaliana (Mouse-ear cress), this protein is ATP-dependent DNA helicase Q-like 2.